A 143-amino-acid polypeptide reads, in one-letter code: Mannitol-specific phosphotransferase enzyme IIA component (143 aa).

The region spanning Met1–His142 is the PTS EIIA type-2 domain. His61 functions as the Tele-phosphohistidine intermediate in the catalytic mechanism. Residue His61 is modified to Phosphohistidine; by HPr.

The protein resides in the cytoplasm. The phosphoenolpyruvate-dependent sugar phosphotransferase system (sugar PTS), a major carbohydrate active transport system, catalyzes the phosphorylation of incoming sugar substrates concomitantly with their translocation across the cell membrane. The enzyme II CmtAB PTS system is involved in D-mannitol transport. This is Mannitol-specific phosphotransferase enzyme IIA component (mtlF) from Mycoplasma pneumoniae (strain ATCC 29342 / M129 / Subtype 1) (Mycoplasmoides pneumoniae).